We begin with the raw amino-acid sequence, 518 residues long: 2-isopropylmalate synthase (518 aa).

Residues Val-5–Tyr-267 form the Pyruvate carboxyltransferase domain. 4 residues coordinate Mn(2+): Asp-14, His-202, His-204, and Asn-238. Positions Ser-392–Asn-518 are regulatory domain.

Belongs to the alpha-IPM synthase/homocitrate synthase family. LeuA type 1 subfamily. Homodimer. Mn(2+) serves as cofactor.

It is found in the cytoplasm. The enzyme catalyses 3-methyl-2-oxobutanoate + acetyl-CoA + H2O = (2S)-2-isopropylmalate + CoA + H(+). It functions in the pathway amino-acid biosynthesis; L-leucine biosynthesis; L-leucine from 3-methyl-2-oxobutanoate: step 1/4. Catalyzes the condensation of the acetyl group of acetyl-CoA with 3-methyl-2-oxobutanoate (2-ketoisovalerate) to form 3-carboxy-3-hydroxy-4-methylpentanoate (2-isopropylmalate). This chain is 2-isopropylmalate synthase, found in Buchnera aphidicola subsp. Rhopalosiphum padi.